We begin with the raw amino-acid sequence, 477 residues long: Salivary plasminogen activator alpha 2 (477 aa).

An N-terminal signal peptide occupies residues Met-1 to Arg-36. Residues Val-40–Val-82 form the Fibronectin type-I domain. 14 disulfide bridges follow: Cys-42–Cys-72, Cys-70–Cys-79, Cys-87–Cys-98, Cys-92–Cys-109, Cys-111–Cys-120, Cys-128–Cys-209, Cys-149–Cys-191, Cys-180–Cys-204, Cys-214–Cys-345, Cys-257–Cys-273, Cys-265–Cys-334, Cys-359–Cys-434, Cys-391–Cys-407, and Cys-424–Cys-452. The 39-residue stretch at Pro-83–Glu-121 folds into the EGF-like domain. The Kringle domain occupies Cys-128–Cys-209. N-linked (GlcNAc...) asparagine glycosylation occurs at Asn-185. The Peptidase S1 domain occupies Ser-226–Arg-476. Active-site charge relay system residues include His-272 and Asp-321. A glycan (N-linked (GlcNAc...) asparagine) is linked at Asn-398. The Charge relay system role is filled by Ser-428.

It belongs to the peptidase S1 family. In terms of assembly, monomer.

Its subcellular location is the secreted. The catalysed reaction is Specific cleavage of Arg-|-Val bond in plasminogen to form plasmin.. Its activity is regulated as follows. Activity toward plasminogen is stimulated in the presence of fibrin I. Functionally, probably essential to support the feeding habits of this exclusively haematophagous animal. Probable potent thrombolytic agent. The chain is Salivary plasminogen activator alpha 2 from Desmodus rotundus (Vampire bat).